Here is a 312-residue protein sequence, read N- to C-terminus: MNPLTQVKRTQVINQKEALLGIGEDGSWHAKFKDSAYVFVGGIPYDLTEGDLLAVFAQYGEVVDVNLVRDKGTGKSKGFAFLAYEDQRSTILAVDNLNGAKVLGRIVRVDHVSKYKKKEEEDEEELQKKREARGVCYAFQKGECNRGASCRYSHDEQRNANTGWGSKEESKARWEHDRHHEPPMSHKKFPSSAGEQRFPDRAKEENKSTGREGQSSRSEAYKDRDSRLRHSDRGSKDHDRYRHDRSPERSRGDRQRNNDRYAQGRDEKSERYRSEVKHDEGDQKRSRRDTDSSGHYERRGNEDSERYRKSRR.

The 79-residue stretch at 36–114 folds into the RRM domain; it reads AYVFVGGIPY…RIVRVDHVSK (79 aa). The C3H1-type zinc finger occupies 130–157; it reads REARGVCYAFQKGECNRGASCRYSHDEQ. Positions 153 to 312 are disordered; it reads SHDEQRNANT…DSERYRKSRR (160 aa). Basic and acidic residues-rich tracts occupy residues 166–184, 197–210, and 219–312; these read SKEESKARWEHDRHHEPPM, RFPDRAKEENKSTG, and EAYK…KSRR.

In Oryza sativa subsp. japonica (Rice), this protein is Zinc finger CCCH domain-containing protein 25.